A 257-amino-acid chain; its full sequence is Phosphate import ATP-binding protein PstB (257 aa).

The region spanning 11-252 is the ABC transporter domain; sequence IQVRDLNFYY…PAKKQTEDYI (242 aa). ATP is bound at residue 43–50; the sequence is GPSGCGKS.

It belongs to the ABC transporter superfamily. Phosphate importer (TC 3.A.1.7) family. In terms of assembly, the complex is composed of two ATP-binding proteins (PstB), two transmembrane proteins (PstC and PstA) and a solute-binding protein (PstS).

Its subcellular location is the cell inner membrane. The enzyme catalyses phosphate(out) + ATP + H2O = ADP + 2 phosphate(in) + H(+). Part of the ABC transporter complex PstSACB involved in phosphate import. Responsible for energy coupling to the transport system. The sequence is that of Phosphate import ATP-binding protein PstB from Enterobacter cloacae.